We begin with the raw amino-acid sequence, 176 residues long: MNIIEQLEAEQAAKIAAKRTLPDFSAGDTVRVNVRVVEGSRTRVQAYEGVCIARSGGGLNESFTVRKISYGEGVERVFPVYSPLVESVEVVRRGKVRRAKLYYLRDRRGKSARIVENTGTRARKLNEAERQAVAEEKARIEAEKVAAAQALAAEKAAAEAAEKAAAEAKAAEAAAE.

This sequence belongs to the bacterial ribosomal protein bL19 family.

Functionally, this protein is located at the 30S-50S ribosomal subunit interface and may play a role in the structure and function of the aminoacyl-tRNA binding site. The sequence is that of Large ribosomal subunit protein bL19 from Sinorhizobium fredii (strain NBRC 101917 / NGR234).